The following is a 360-amino-acid chain: Hereditary hemochromatosis protein homolog (360 aa).

The signal sequence occupies residues 1–25 (MDRSAGLPVRLLLLLLLLLLWSVAP). An alpha-1 region spans residues 26–127 (QALRPGSHSL…KVTKLRVVPE (102 aa)). The Extracellular portion of the chain corresponds to 26–319 (QALRPGSHSL…WEPSRSQDMI (294 aa)). 4 N-linked (GlcNAc...) asparagine glycosylation sites follow: Asn115, Asn143, Asn167, and Asn247. An alpha-2 region spans residues 128 to 218 (SHILQVILGC…ELQRGVLGQQ (91 aa)). 2 cysteine pairs are disulfide-bonded: Cys137–Cys200 and Cys238–Cys295. The alpha-3 stretch occupies residues 219 to 310 (VPTLVKVTRH…GLDQPLTATW (92 aa)). One can recognise an Ig-like C1-type domain in the interval 220–309 (PTLVKVTRHW…PGLDQPLTAT (90 aa)). Residues 311 to 319 (EPSRSQDMI) form a connecting peptide region. The helical transmembrane segment at 320–340 (IGIISGITICAIFFVGILILV) threads the bilayer. Topologically, residues 341-360 (LRKRKVSGGTMGDYVLTECE) are cytoplasmic.

The protein belongs to the MHC class I family. As to quaternary structure, binds TFR through the extracellular domain in a pH-dependent manner.

The protein resides in the cell membrane. Binds to transferrin receptor (TFR) and reduces its affinity for iron-loaded transferrin. This is Hereditary hemochromatosis protein homolog (Hfe) from Rattus norvegicus (Rat).